Consider the following 414-residue polypeptide: Putative competence-damage inducible protein (414 aa).

This sequence belongs to the CinA family.

This is Putative competence-damage inducible protein from Geobacillus kaustophilus (strain HTA426).